Here is a 157-residue protein sequence, read N- to C-terminus: Transcriptional repressor NrdR (157 aa).

The segment at 3 to 34 (CPFCNTVDTKVIDSRLVSEGSQIKRRRQCAIC) is a zinc-finger region. The ATP-cone domain occupies 49 to 139 (PRVIKNDDLL…VYRSFEDVRE (91 aa)).

It belongs to the NrdR family. Requires Zn(2+) as cofactor.

Negatively regulates transcription of bacterial ribonucleotide reductase nrd genes and operons by binding to NrdR-boxes. The protein is Transcriptional repressor NrdR of Hamiltonella defensa subsp. Acyrthosiphon pisum (strain 5AT).